Here is a 225-residue protein sequence, read N- to C-terminus: MSTLFVAGAGTEIGKTYVTAALTRALRASGRPVRALKPVASGVPDLSDPDFSASDTALLLAAQDLPVTPETVAAMTPWRFAAPLAPDLAAAREGRSLALADLVAWCETAIAAPAPGTAVLIEGVGGLMSPLTAEATGLAWLKALRLPVLLVSGSYLGAISHALTAIETLHHHAVDLRAVVVSETPGAPTPPETVAEAIARHAGVRVLCVARGGGFPAEGLDVVPA.

12–17 (EIGKTY) serves as a coordination point for ATP. Threonine 16 contributes to the Mg(2+) binding site. Lysine 37 is an active-site residue. Substrate is bound at residue serine 41. Residues aspartate 55, 122 to 125 (EGVG), and 182 to 183 (SE) contribute to the ATP site. Residues aspartate 55 and glutamate 122 each contribute to the Mg(2+) site.

This sequence belongs to the dethiobiotin synthetase family. Homodimer. Mg(2+) is required as a cofactor.

It localises to the cytoplasm. It catalyses the reaction (7R,8S)-7,8-diammoniononanoate + CO2 + ATP = (4R,5S)-dethiobiotin + ADP + phosphate + 3 H(+). The protein operates within cofactor biosynthesis; biotin biosynthesis; biotin from 7,8-diaminononanoate: step 1/2. In terms of biological role, catalyzes a mechanistically unusual reaction, the ATP-dependent insertion of CO2 between the N7 and N8 nitrogen atoms of 7,8-diaminopelargonic acid (DAPA, also called 7,8-diammoniononanoate) to form a ureido ring. This chain is ATP-dependent dethiobiotin synthetase BioD, found in Methylobacterium nodulans (strain LMG 21967 / CNCM I-2342 / ORS 2060).